A 91-amino-acid polypeptide reads, in one-letter code: Large ribosomal subunit protein uL22 (91 aa).

Belongs to the universal ribosomal protein uL22 family. As to quaternary structure, part of the 50S ribosomal subunit.

Functionally, this protein binds specifically to 23S rRNA; its binding is stimulated by other ribosomal proteins, e.g. L4, L17, and L20. It is important during the early stages of 50S assembly. It makes multiple contacts with different domains of the 23S rRNA in the assembled 50S subunit and ribosome. Its function is as follows. The globular domain of the protein is located near the polypeptide exit tunnel on the outside of the subunit, while an extended beta-hairpin is found that lines the wall of the exit tunnel in the center of the 70S ribosome. This is Large ribosomal subunit protein uL22 (rplV) from Pigeon pea witches'-broom phytoplasma.